The chain runs to 314 residues: MEKWMNLRDEDLTEETKTLISSLSSEKGYLGRNLCKYQGSWYYYNFLQGVLNFQRGFKPQDTDIIVASYPKSGTLWLKALTVALFERTKNPSHDDPMSHPLLSNNPHNLLSSSSPRLFSTHTPFHTLQVAVKDSPCKVVYICRDAKDSLVSRWHIVCRSLNKEEDRTILESMFESFCSGVCLFGPFWDHILSYWKASLEKPKQVLFMRYDEIKTDPHGQLKKLAEFLGCPFSKEEEKNGSLNKILEMCSLPNLSSLEVNKTGKSINGIEYKNHFRKGIVGDWKNHLTPEMGSKIDMIMKEKLKDYSEVWFENAL.

A 3'-phosphoadenylyl sulfate-binding site is contributed by 71-76 (KSGTLW). The Proton acceptor role is filled by H121. Residues R143, S151, Y209, and 275–277 (RKG) each bind 3'-phosphoadenylyl sulfate.

Belongs to the sulfotransferase 1 family.

It is found in the cytoplasm. Functionally, sulfotransferase that utilizes 3'-phospho-5'-adenylyl sulfate (PAPS) as sulfonate donor. In Arabidopsis thaliana (Mouse-ear cress), this protein is Cytosolic sulfotransferase 3 (SOT3).